Consider the following 513-residue polypeptide: Meiotically up-regulated gene 133 protein (513 aa).

Belongs to the UPF0300 family.

It localises to the golgi apparatus. The protein localises to the vacuole membrane. Functionally, has a role in meiosis. This chain is Meiotically up-regulated gene 133 protein (mug133), found in Schizosaccharomyces pombe (strain 972 / ATCC 24843) (Fission yeast).